We begin with the raw amino-acid sequence, 290 residues long: MIPSWVSLRAGDYEKIINVRRALSRHGIYTVCEGAKCPNIFHCWGEGTATFMILGEVCTRACRFCAVRTGNPRGYVDWGEVDRLVEAVRELGLKYVVVTSVARDDLPDGGASVFAAVVKKLREVGCVVEVLVPDFGGSPASVKTVVSSGPDVFAHNVETVRRLTPLVRDRRAGYERSLSVLKYAKEFGAPLTKSGLMLGLGETFEEVVETLEDLRRADVDIVTIGQYIKPSGSPRHLNPVRYATPEEFAKIKEVAVSLGFKAVASGPLVRSSYKAYSLYREALKNIVYLG.

[4Fe-4S] cluster contacts are provided by C32, C37, C43, C58, C62, C65, and S272. The Radical SAM core domain maps to W44–K261.

It belongs to the radical SAM superfamily. Lipoyl synthase family. Requires [4Fe-4S] cluster as cofactor.

The protein localises to the cytoplasm. It catalyses the reaction [[Fe-S] cluster scaffold protein carrying a second [4Fe-4S](2+) cluster] + N(6)-octanoyl-L-lysyl-[protein] + 2 oxidized [2Fe-2S]-[ferredoxin] + 2 S-adenosyl-L-methionine + 4 H(+) = [[Fe-S] cluster scaffold protein] + N(6)-[(R)-dihydrolipoyl]-L-lysyl-[protein] + 4 Fe(3+) + 2 hydrogen sulfide + 2 5'-deoxyadenosine + 2 L-methionine + 2 reduced [2Fe-2S]-[ferredoxin]. The protein operates within protein modification; protein lipoylation via endogenous pathway; protein N(6)-(lipoyl)lysine from octanoyl-[acyl-carrier-protein]: step 2/2. Its function is as follows. Catalyzes the radical-mediated insertion of two sulfur atoms into the C-6 and C-8 positions of the octanoyl moiety bound to the lipoyl domains of lipoate-dependent enzymes, thereby converting the octanoylated domains into lipoylated derivatives. The polypeptide is Lipoyl synthase (Pyrobaculum aerophilum (strain ATCC 51768 / DSM 7523 / JCM 9630 / CIP 104966 / NBRC 100827 / IM2)).